The primary structure comprises 118 residues: Large ribosomal subunit protein bL17 (118 aa).

The protein belongs to the bacterial ribosomal protein bL17 family. As to quaternary structure, part of the 50S ribosomal subunit. Contacts protein L32.

The chain is Large ribosomal subunit protein bL17 from Campylobacter concisus (strain 13826).